A 536-amino-acid polypeptide reads, in one-letter code: MEIRQHEWLSASPHEGFEQMRLKSRPKEPSPSLTRVGANFYSSVKQQDYSASVWLRRKDKLEHSQQKCIVIFALVCCFAVLVALIFSAVDIMGEDEDGLSEKNCQNKCRIALVENIPEGLNYSEDAPFHLPLFQGWMNLLNMAKKSVDIVSSHWDLNHTHPAACQGQRLFEKLLQLTSQNIEVKLVSDVTADSKVLEALKLKGAEVTYMNMTAYNKGRLQSSFWIVDKQHVYIGSAGLDWRSLGQMKELGVIFYNCSCLVLDLQRIFALYSSLKFKSRVPQTWSKRLYGVYDNEKKLQLQLNETKSQAFVSNSPKLFCPKNRSFDIDAIYSVIDDAKQYVYIAVTDYLPISSTSSKRTYWPDLDGKIREALVLRSVKVRLLISFWKETDPLTFNFISSLKAICTEIANCSLKVKFFDLERENACATKEQKNQTFPKLNRNKYMVTDGAAYIGNFDWVGNDFTQNAGTGLVINQADVRDNRSIIKQLKDVFERDWYSPYAKSIQPTKQPNCSSLSKLKSPSKQPAMANATGREPLSV.

Residues Met1–Cys68 lie on the Cytoplasmic side of the membrane. The chain crosses the membrane as a helical span at residues Ile69–Val89. At Asp90–Val536 the chain is on the extracellular side. Residue Asn121 is glycosylated (N-linked (GlcNAc...) asparagine). In terms of domain architecture, PLD phosphodiesterase 1 spans Asn215 to Ser242. The N-linked (GlcNAc...) asparagine glycan is linked to Asn302. Positions Phe434 to Asp460 constitute a PLD phosphodiesterase 2 domain. The interval Gln503–Val536 is disordered. Low complexity predominate over residues Ser511–Lys521.

Belongs to the phospholipase D family.

Its subcellular location is the membrane. The sequence is that of Inactive phospholipase D5 (Pld5) from Mus musculus (Mouse).